Reading from the N-terminus, the 37-residue chain is Large ribosomal subunit protein bL36 (37 aa).

It belongs to the bacterial ribosomal protein bL36 family.

The chain is Large ribosomal subunit protein bL36 from Leptospira interrogans serogroup Icterohaemorrhagiae serovar copenhageni (strain Fiocruz L1-130).